A 456-amino-acid chain; its full sequence is Adenylosuccinate synthetase isozyme 1 (456 aa).

Positions methionine 1–asparagine 30 are disordered. GTP contacts are provided by residues glycine 41 to lysine 47 and glycine 69 to threonine 71. Residue aspartate 42 is the Proton acceptor of the active site. Mg(2+)-binding residues include aspartate 42 and glycine 69. Aspartate 42 provides a ligand contact to substrate. IMP contacts are provided by residues aspartate 42–lysine 45 and asparagine 67–histidine 70. Histidine 70 (proton donor) is an active-site residue. Serine 130 is modified (phosphoserine). Residues threonine 162, arginine 176, asparagine 255, threonine 270, and arginine 334 each coordinate IMP. Substrate is bound at residue valine 330 to arginine 336. GTP is bound by residues arginine 336, lysine 362–aspartate 364, and glycine 444–lysine 447.

The protein belongs to the adenylosuccinate synthetase family. Homodimer. Requires Mg(2+) as cofactor.

It localises to the cytoplasm. It catalyses the reaction IMP + L-aspartate + GTP = N(6)-(1,2-dicarboxyethyl)-AMP + GDP + phosphate + 2 H(+). It functions in the pathway purine metabolism; AMP biosynthesis via de novo pathway; AMP from IMP: step 1/2. In terms of biological role, component of the purine nucleotide cycle (PNC), which interconverts IMP and AMP to regulate the nucleotide levels in various tissues, and which contributes to glycolysis and ammoniagenesis. Catalyzes the first committed step in the biosynthesis of AMP from IMP. This is Adenylosuccinate synthetase isozyme 1 (adss1) from Danio rerio (Zebrafish).